A 337-amino-acid polypeptide reads, in one-letter code: 4-hydroxythreonine-4-phosphate dehydrogenase (337 aa).

H137 and T138 together coordinate substrate. 3 residues coordinate a divalent metal cation: H167, H212, and H267. K275, N284, and R293 together coordinate substrate.

The protein belongs to the PdxA family. In terms of assembly, homodimer. It depends on Zn(2+) as a cofactor. The cofactor is Mg(2+). Co(2+) serves as cofactor.

Its subcellular location is the cytoplasm. It catalyses the reaction 4-(phosphooxy)-L-threonine + NAD(+) = 3-amino-2-oxopropyl phosphate + CO2 + NADH. It functions in the pathway cofactor biosynthesis; pyridoxine 5'-phosphate biosynthesis; pyridoxine 5'-phosphate from D-erythrose 4-phosphate: step 4/5. Its function is as follows. Catalyzes the NAD(P)-dependent oxidation of 4-(phosphooxy)-L-threonine (HTP) into 2-amino-3-oxo-4-(phosphooxy)butyric acid which spontaneously decarboxylates to form 3-amino-2-oxopropyl phosphate (AHAP). This is 4-hydroxythreonine-4-phosphate dehydrogenase from Ectopseudomonas mendocina (strain ymp) (Pseudomonas mendocina).